The primary structure comprises 114 residues: ATP synthase subunit c (114 aa).

2 helical membrane passes run 31-51 (AVFYGALAIGAGVAIGAAAGG) and 88-108 (IETFVLYALLIAIIFIFTGIF).

It belongs to the ATPase C chain family. In terms of assembly, F-type ATPases have 2 components, F(1) - the catalytic core - and F(0) - the membrane proton channel. F(1) has five subunits: alpha(3), beta(3), gamma(1), delta(1), epsilon(1). F(0) has three main subunits: a(1), b(2) and c(10-14). The alpha and beta chains form an alternating ring which encloses part of the gamma chain. F(1) is attached to F(0) by a central stalk formed by the gamma and epsilon chains, while a peripheral stalk is formed by the delta and b chains.

It is found in the cell inner membrane. Functionally, f(1)F(0) ATP synthase produces ATP from ADP in the presence of a proton or sodium gradient. F-type ATPases consist of two structural domains, F(1) containing the extramembraneous catalytic core and F(0) containing the membrane proton channel, linked together by a central stalk and a peripheral stalk. During catalysis, ATP synthesis in the catalytic domain of F(1) is coupled via a rotary mechanism of the central stalk subunits to proton translocation. Key component of the F(0) channel; it plays a direct role in translocation across the membrane. A homomeric c-ring of between 10-14 subunits forms the central stalk rotor element with the F(1) delta and epsilon subunits. In Sulfurihydrogenibium sp. (strain YO3AOP1), this protein is ATP synthase subunit c.